The chain runs to 193 residues: dTTP/UTP pyrophosphatase (193 aa).

The active-site Proton acceptor is D77.

Belongs to the Maf family. YhdE subfamily. The cofactor is a divalent metal cation.

It localises to the cytoplasm. It catalyses the reaction dTTP + H2O = dTMP + diphosphate + H(+). It carries out the reaction UTP + H2O = UMP + diphosphate + H(+). Its function is as follows. Nucleoside triphosphate pyrophosphatase that hydrolyzes dTTP and UTP. May have a dual role in cell division arrest and in preventing the incorporation of modified nucleotides into cellular nucleic acids. This chain is dTTP/UTP pyrophosphatase, found in Phocaeicola vulgatus (strain ATCC 8482 / DSM 1447 / JCM 5826 / CCUG 4940 / NBRC 14291 / NCTC 11154) (Bacteroides vulgatus).